Here is a 438-residue protein sequence, read N- to C-terminus: Delta(14)-sterol reductase ERG24 (438 aa).

The Lumenal segment spans residues 1–13 (MVSALNPRTTEFE). Residues 14–34 (FGGLIGALGISIGLPVFTIIL) form a helical membrane-spanning segment. Over 35-71 (NQMIRPDYFIKGFFQNFDIVELWNGIKPLRYYLGNRE) the chain is Cytoplasmic. The chain crosses the membrane as a helical span at residues 72-90 (LWTVYCLWYGILAVLDVIL). The Lumenal portion of the chain corresponds to 91–109 (PGRVMKGVQLRDGSKLSYK). Residues 110–127 (INGIAMSTTLVLVLAIRW) form a helical membrane-spanning segment. Topologically, residues 128–147 (KLTDGQLPELQYLYENHVSL) are cytoplasmic. A helical membrane pass occupies residues 148 to 172 (CIISILFSFFLATYCYVASFIPLIF). At 173–242 (KKNGNGKREK…LHHHYLKTGK (70 aa)) the chain is on the lumenal side. The helical transmembrane segment at 243 to 263 (INDALVLVNFLQGFYIFDGVL) threads the bilayer. At 264 to 308 (NEEGVLTMMDITTDGFGFMLAFGDLSLVPFTYSLQARYLSVSPVE) the chain is on the cytoplasmic side. A helical transmembrane segment spans residues 309–328 (LGWVKVVGILAIMFLGFHIF). Over 329 to 368 (HSANKQKSEFRQGKLENLKSIQTKRGTKLLCDGWWAKSQH) the chain is Lumenal. NADP(+)-binding positions include Lys335, Arg339, Leu358, Trp363, 370–371 (NY), Asp410, 414–418 (CRLKY), and Tyr425. The chain crosses the membrane as a helical span at residues 369–387 (INYFGDWLISLSWCLATWF). The Cytoplasmic portion of the chain corresponds to 388-438 (QTPLTYYYSLYFATLLLHRQQRDEHKCRLKYGENWEEYERKVPYKIIPYVY).

It belongs to the ERG4/ERG24 family.

The protein localises to the membrane. It catalyses the reaction 4,4-dimethyl-5alpha-cholesta-8,24-dien-3beta-ol + NADP(+) = 4,4-dimethyl-5alpha-cholesta-8,14,24-trien-3beta-ol + NADPH + H(+). It functions in the pathway steroid biosynthesis; zymosterol biosynthesis; zymosterol from lanosterol: step 2/6. Inhibited by the morpholine antifungal drug fenpropimorph. Delta(14)-sterol reductase; part of the third module of ergosterol biosynthesis pathway that includes the late steps of the pathway. ERG24 reduces the C14=C15 double bond of 4,4-dimethyl-cholesta-8,14,24-trienol to produce 4,4-dimethyl-cholesta-8,24-dienol. The third module or late pathway involves the ergosterol synthesis itself through consecutive reactions that mainly occur in the endoplasmic reticulum (ER) membrane. Firstly, the squalene synthase ERG9 catalyzes the condensation of 2 farnesyl pyrophosphate moieties to form squalene, which is the precursor of all steroids. Squalene synthase is crucial for balancing the incorporation of farnesyl diphosphate (FPP) into sterol and nonsterol isoprene synthesis. Secondly, the squalene epoxidase ERG1 catalyzes the stereospecific oxidation of squalene to (S)-2,3-epoxysqualene, which is considered to be a rate-limiting enzyme in steroid biosynthesis. Then, the lanosterol synthase ERG7 catalyzes the cyclization of (S)-2,3 oxidosqualene to lanosterol, a reaction that forms the sterol core. In the next steps, lanosterol is transformed to zymosterol through a complex process involving various demethylation, reduction and desaturation reactions. The lanosterol 14-alpha-demethylase ERG11 (also known as CYP51) catalyzes C14-demethylation of lanosterol to produce 4,4'-dimethyl cholesta-8,14,24-triene-3-beta-ol, which is critical for ergosterol biosynthesis. The C-14 reductase ERG24 reduces the C14=C15 double bond of 4,4-dimethyl-cholesta-8,14,24-trienol to produce 4,4-dimethyl-cholesta-8,24-dienol. 4,4-dimethyl-cholesta-8,24-dienol is substrate of the C-4 demethylation complex ERG25-ERG26-ERG27 in which ERG25 catalyzes the three-step monooxygenation required for the demethylation of 4,4-dimethyl and 4alpha-methylsterols, ERG26 catalyzes the oxidative decarboxylation that results in a reduction of the 3-beta-hydroxy group at the C-3 carbon to an oxo group, and ERG27 is responsible for the reduction of the keto group on the C-3. ERG28 has a role as a scaffold to help anchor ERG25, ERG26 and ERG27 to the endoplasmic reticulum and ERG29 regulates the activity of the iron-containing C4-methylsterol oxidase ERG25. Then, the sterol 24-C-methyltransferase ERG6 catalyzes the methyl transfer from S-adenosyl-methionine to the C-24 of zymosterol to form fecosterol. The C-8 sterol isomerase ERG2 catalyzes the reaction which results in unsaturation at C-7 in the B ring of sterols and thus converts fecosterol to episterol. The sterol-C5-desaturase ERG3 then catalyzes the introduction of a C-5 double bond in the B ring to produce 5-dehydroepisterol. The C-22 sterol desaturase ERG5 further converts 5-dehydroepisterol into ergosta-5,7,22,24(28)-tetraen-3beta-ol by forming the C-22(23) double bond in the sterol side chain. Finally, ergosta-5,7,22,24(28)-tetraen-3beta-ol is substrate of the C-24(28) sterol reductase ERG4 to produce ergosterol. The protein is Delta(14)-sterol reductase ERG24 of Saccharomyces cerevisiae (strain ATCC 204508 / S288c) (Baker's yeast).